Here is a 504-residue protein sequence, read N- to C-terminus: L-carnitine/gamma-butyrobetaine antiporter (504 aa).

Helical transmembrane passes span 10-30, 51-71, 92-112, 143-163, 195-215, 231-251, 263-283, 316-336, 347-367, 398-418, 446-466, and 475-495; these read IEPK…WLTV, WGWA…WLVF, IFMM…SIEI, GPLP…FFFV, FYLV…TPLV, LDAI…ACGL, SYLS…SFIM, WTVF…IFLA, LCFG…TVLG, WAAL…CFIA, LLVR…LLAL, and AIIA…LSFI.

The protein belongs to the BCCT transporter (TC 2.A.15) family. CaiT subfamily. In terms of assembly, homotrimer.

The protein localises to the cell inner membrane. The enzyme catalyses 4-(trimethylamino)butanoate(in) + (R)-carnitine(out) = 4-(trimethylamino)butanoate(out) + (R)-carnitine(in). It functions in the pathway amine and polyamine metabolism; carnitine metabolism. In terms of biological role, catalyzes the exchange of L-carnitine for gamma-butyrobetaine. The polypeptide is L-carnitine/gamma-butyrobetaine antiporter (Escherichia coli O6:K15:H31 (strain 536 / UPEC)).